Here is a 165-residue protein sequence, read N- to C-terminus: UI (165 aa).

Residues 1 to 18 (MKPVPLILLLATVLLSSH) form the signal peptide. V163 is subject to Valine amide.

Belongs to the sauvagine/corticotropin-releasing factor/urotensin I family.

Its subcellular location is the secreted. In terms of biological role, urotensin is found in the teleost caudal neurosecretory system. It has a suggested role in osmoregulation and as a corticotropin-releasing factor. The non-hormonal portion of this precursor may be a urotensin binding protein, urophysin. The polypeptide is UI (Oncorhynchus mykiss (Rainbow trout)).